The following is a 366-amino-acid chain: DNA primase large subunit PriL (366 aa).

[4Fe-4S] cluster-binding residues include Cys227, Cys298, Cys307, and Cys314.

This sequence belongs to the eukaryotic-type primase large subunit family. In terms of assembly, heterodimer of a small subunit (PriS) and a large subunit (PriL). [4Fe-4S] cluster is required as a cofactor.

Regulatory subunit of DNA primase, an RNA polymerase that catalyzes the synthesis of short RNA molecules used as primers for DNA polymerase during DNA replication. Stabilizes and modulates the activity of the small subunit, increasing the rate of DNA synthesis, and conferring RNA synthesis capability. The DNA polymerase activity may enable DNA primase to also catalyze primer extension after primer synthesis. May also play a role in DNA repair. The protein is DNA primase large subunit PriL of Methanocella arvoryzae (strain DSM 22066 / NBRC 105507 / MRE50).